A 256-amino-acid polypeptide reads, in one-letter code: Cytokine-inducible SH2-containing protein (256 aa).

Residues 81-162 form the SH2 domain; that stretch reads WYWGSITASE…PDVVSLVQHY (82 aa). The tract at residues 168 to 190 is disordered; the sequence is ADTRSDSPDPAPTPALPVSKPDA. The region spanning 207 to 255 is the SOCS box domain; the sequence is KLVQPFVRRSSARSLQHLCRLVINRLVTDVDCLPLPRRMADYLRQYPFQ.

As to quaternary structure, stably associated with the tyrosine-phosphorylated IL3 receptor beta chain and tyrosine-phosphorylated EPO receptor (EPOR).

It participates in protein modification; protein ubiquitination. In terms of biological role, SOCS family proteins form part of a classical negative feedback system that regulates cytokine signal transduction. CIS is involved in the negative regulation of cytokines that signal through the JAK-STAT5 pathway such as erythropoietin, prolactin and interleukin 3 (IL3) receptor. Inhibits STAT5 trans-activation by suppressing its tyrosine phosphorylation. May be a substrate recognition component of a SCF-like ECS (Elongin BC-CUL2/5-SOCS-box protein) E3 ubiquitin-protein ligase complex which mediates the ubiquitination and subsequent proteasomal degradation of target proteins. This is Cytokine-inducible SH2-containing protein (Cish) from Rattus norvegicus (Rat).